The chain runs to 141 residues: Hemoglobin subunit beta-C (141 aa).

Positions 1-141 (PNKALITGFW…VASALAHRYH (141 aa)) constitute a Globin domain. Residues H58 and H87 each coordinate heme b.

This sequence belongs to the globin family. In terms of assembly, heterotetramer of two alpha chains and two beta chains. As to expression, red blood cells.

Its function is as follows. Involved in oxygen transport from the lung to the various peripheral tissues. The sequence is that of Hemoglobin subunit beta-C from Ammotragus lervia (Barbary sheep).